Reading from the N-terminus, the 363-residue chain is MSKKNNLLVAASGTGGHIFPALAVSKEVEDEWNIHWLGIQQRLDANLIPQKYNLKTLNLKTPRKNIFLFYQYIKILMSTFQIIRILKEKKINLVFTTGGYISAPTIVASKILKIPIIIHESNVVPGMVTKYFGFLCNYVLLGFKETNSYLKNCKTIFTGTPLREQFYKFNFLPEWVPKGNGPLLIVMGGSQGAKAINQILYESLEFLIKKQFRIVHIVGESHLKTFHVKNSKNYIQKKFTNEIAALIQNCDLVISRSGAGTINELMEAEKPSILIPYPYSKNNHQEKNAMILAASGGSVLINQNNMSKEVFEETLERIFKIKSKKGKKNYEILDLMKKNMENNNKIKSKNEIKKYIDYFLKEF.

UDP-N-acetyl-alpha-D-glucosamine is bound by residues 14–16 (TGG), Asn-122, Arg-163, Ser-190, and Gln-285.

The protein belongs to the glycosyltransferase 28 family. MurG subfamily.

The protein resides in the cell inner membrane. It catalyses the reaction di-trans,octa-cis-undecaprenyl diphospho-N-acetyl-alpha-D-muramoyl-L-alanyl-D-glutamyl-meso-2,6-diaminopimeloyl-D-alanyl-D-alanine + UDP-N-acetyl-alpha-D-glucosamine = di-trans,octa-cis-undecaprenyl diphospho-[N-acetyl-alpha-D-glucosaminyl-(1-&gt;4)]-N-acetyl-alpha-D-muramoyl-L-alanyl-D-glutamyl-meso-2,6-diaminopimeloyl-D-alanyl-D-alanine + UDP + H(+). Its pathway is cell wall biogenesis; peptidoglycan biosynthesis. In terms of biological role, cell wall formation. Catalyzes the transfer of a GlcNAc subunit on undecaprenyl-pyrophosphoryl-MurNAc-pentapeptide (lipid intermediate I) to form undecaprenyl-pyrophosphoryl-MurNAc-(pentapeptide)GlcNAc (lipid intermediate II). In Prochlorococcus marinus (strain AS9601), this protein is UDP-N-acetylglucosamine--N-acetylmuramyl-(pentapeptide) pyrophosphoryl-undecaprenol N-acetylglucosamine transferase.